A 441-amino-acid chain; its full sequence is Transcriptional regulatory protein ZraR (441 aa).

The Response regulatory domain maps to 7–121 (DILVVDDDIS…NLQATLEKAL (115 aa)). Aspartate 56 is modified (4-aspartylphosphate). The region spanning 141-370 (MVGKSPAMQH…LENAVERAVV (230 aa)) is the Sigma-54 factor interaction domain. ATP-binding residues include glycine 172, threonine 173, arginine 329, and arginine 359. The H-T-H motif DNA-binding region spans 421-440 (KTEAARQLGITRKTLLAKLS).

In terms of processing, phosphorylated by ZraS.

It is found in the cytoplasm. Activity of the ZraS/ZraR two-component system is repressed by the zinc-bound form of ZraP, which probably interacts with the periplasmic region of ZraS. Part of the Zra signaling pathway, an envelope stress response (ESR) system composed of the periplasmic accessory protein ZraP, the histidine kinase ZraS and the transcriptional regulator ZraR. The ZraPSR system contributes to antibiotic resistance and is important for membrane integrity in the presence of membrane-targeting biocides. ZraR is a member of the two-component regulatory system ZraS/ZraR. When activated by ZraS, acts in conjunction with sigma-54 to regulate the expression of zraP in the presence of high Zn(2+) or Pb(2+) concentrations. Also positively autoregulates the expression of the zraSR operon. The polypeptide is Transcriptional regulatory protein ZraR (zraR) (Escherichia coli O157:H7).